The sequence spans 161 residues: UPF0178 protein BR1979/BS1330_I1973 (161 aa).

This sequence belongs to the UPF0178 family.

The sequence is that of UPF0178 protein BR1979/BS1330_I1973 from Brucella suis biovar 1 (strain 1330).